Reading from the N-terminus, the 414-residue chain is Phosphopentomutase (414 aa).

Mn(2+)-binding residues include Asp-10, Asp-309, His-314, Asp-350, His-351, and His-362.

It belongs to the phosphopentomutase family. The cofactor is Mn(2+).

Its subcellular location is the cytoplasm. It carries out the reaction 2-deoxy-alpha-D-ribose 1-phosphate = 2-deoxy-D-ribose 5-phosphate. The catalysed reaction is alpha-D-ribose 1-phosphate = D-ribose 5-phosphate. The protein operates within carbohydrate degradation; 2-deoxy-D-ribose 1-phosphate degradation; D-glyceraldehyde 3-phosphate and acetaldehyde from 2-deoxy-alpha-D-ribose 1-phosphate: step 1/2. Isomerase that catalyzes the conversion of deoxy-ribose 1-phosphate (dRib-1-P) and ribose 1-phosphate (Rib-1-P) to deoxy-ribose 5-phosphate (dRib-5-P) and ribose 5-phosphate (Rib-5-P), respectively. This is Phosphopentomutase from Hahella chejuensis (strain KCTC 2396).